Reading from the N-terminus, the 76-residue chain is U-scoloptoxin(13)-Sm1a (76 aa).

Residues 1–22 (MAYICAXTLAFLLCVNTGIIQA) form the signal peptide.

The protein belongs to the scoloptoxin-13 family. In terms of processing, contains 4 disulfide bonds. As to expression, expressed by the venom gland.

The protein resides in the secreted. This Scolopendra morsitans (Tanzanian blue ringleg centipede) protein is U-scoloptoxin(13)-Sm1a.